The following is a 510-amino-acid chain: NAD(P)H-quinone oxidoreductase subunit 2 B, chloroplastic (510 aa).

13 helical membrane passes run 24 to 44, 57 to 77, 99 to 119, 124 to 144, 149 to 169, 183 to 203, 227 to 247, 295 to 315, 323 to 343, 354 to 374, 395 to 415, 418 to 438, and 484 to 504; these read LLLF…GLIL, IPWL…ALLF, IFQF…VEYI, MAIA…MFLC, LITI…LSGY, YLLM…WLYG, PGIS…LSPA, WHLL…LIAI, MLAY…IVGD, YMLF…LFGL, ALSL…AGFF, LHLF…IGLL, and MIVC…IIAI.

The protein belongs to the complex I subunit 2 family. As to quaternary structure, NDH is composed of at least 16 different subunits, 5 of which are encoded in the nucleus.

The protein resides in the plastid. It localises to the chloroplast thylakoid membrane. It catalyses the reaction a plastoquinone + NADH + (n+1) H(+)(in) = a plastoquinol + NAD(+) + n H(+)(out). The enzyme catalyses a plastoquinone + NADPH + (n+1) H(+)(in) = a plastoquinol + NADP(+) + n H(+)(out). Its function is as follows. NDH shuttles electrons from NAD(P)H:plastoquinone, via FMN and iron-sulfur (Fe-S) centers, to quinones in the photosynthetic chain and possibly in a chloroplast respiratory chain. The immediate electron acceptor for the enzyme in this species is believed to be plastoquinone. Couples the redox reaction to proton translocation, and thus conserves the redox energy in a proton gradient. This is NAD(P)H-quinone oxidoreductase subunit 2 B, chloroplastic from Gossypium hirsutum (Upland cotton).